The chain runs to 266 residues: MARSALLNVMVQAAMKAGRSLSRDFGEVQNLQVSLKGPGDYVSQADRKAEDIIFAELSKARPGYGFLMEERGAVEGEDSQHRWIVDPLDGTTNFLHGIPLFAVSIALERQGQIVAGVIYNPAMDELYTTERGGGAFMNDRRLRVAGRIKLVDTVIGCGMPHLGRGHHGNFLVELRNVMAEVSGVRRLGSAALDLAYVAAGRMDGFWETGLSAWDIAAGLLLIREAGGFVSDMDGGQDMLDNGSVVAGNEVIQRALLKAVKKPLSAR.

Mg(2+) contacts are provided by Glu69, Asp86, Leu88, and Asp89. Glu69 is a binding site for substrate. Residues 88-91, Arg185, and Asp214 each bind substrate; that span reads LDGT. Asp214 serves as a coordination point for Mg(2+).

It belongs to the inositol monophosphatase superfamily. Mg(2+) is required as a cofactor.

The catalysed reaction is a myo-inositol phosphate + H2O = myo-inositol + phosphate. The sequence is that of Inositol-1-monophosphatase (suhB) from Mesorhizobium japonicum (strain LMG 29417 / CECT 9101 / MAFF 303099) (Mesorhizobium loti (strain MAFF 303099)).